Here is a 562-residue protein sequence, read N- to C-terminus: MDDHKRPLYLPFAGPAILEAPLINKGSAFTDEERVFFNLEGLLPHVIETIEEQASRAYDQYTNFTNDLDRHIYLRNIQDTNETLYYRLVQNHITEMMPIIYTPTVGMACERFSKNYRRNRGLFISYPHKDRIEDILNNSTRQKVKIIVVTDGERILGLGDQGIGGMGIPIGKLSLYTSCGGISPAYTLPITLDVGTDNPHLLEDPMYMGWRNQRIGGEEYKEFVEAFMQAVNRRWPDALIQFEDFAQKNAMPLLERYKDQYCCFNDDIQGTAAVTVGSLLAACKAAKSQLCEQRIAFLGAGSAGCGIAEAIVAQMVSEGIDEAQARSQVFMVDRWGLLQDNMPNLLNFQEKLAQKTQAVKDWTIENGNISLLDVMNNAKPTVLIGVSGAPGLFSEEIIKAMHQHCPRPIVFPLSNPTSRVEATPKDVLHWTNGQALVATGSPFEPVALNGETFEIAQCNNSYIFPGIGLGVLSAGAKRVSDEMLMASSRALAECSPLALNGEGPLLPPLEEIHQVSKHIAFAVAKVAVEQGHALPCTDELLAQSIENNFWTAEYRRYKRTSF.

Catalysis depends on Y101, which acts as the Proton donor. Residue R154 coordinates NAD(+). Residue K172 is the Proton acceptor of the active site. A divalent metal cation contacts are provided by E243, D244, and D267. D267 and N415 together coordinate NAD(+).

The protein belongs to the malic enzymes family. Homotetramer. Mg(2+) is required as a cofactor. It depends on Mn(2+) as a cofactor.

It catalyses the reaction (S)-malate + NAD(+) = pyruvate + CO2 + NADH. The catalysed reaction is oxaloacetate + H(+) = pyruvate + CO2. The sequence is that of NAD-dependent malic enzyme from Shewanella woodyi (strain ATCC 51908 / MS32).